The primary structure comprises 416 residues: Probable sarcosine oxidase (416 aa).

An FAD-binding site is contributed by 10 to 40 (DVIVVGAGVMGSSAAYQLAKRGQKTLLLEQF). At C325 the chain carries S-8alpha-FAD cysteine.

The protein belongs to the MSOX/MTOX family. FAD serves as cofactor.

It catalyses the reaction sarcosine + O2 + H2O = formaldehyde + glycine + H2O2. The chain is Probable sarcosine oxidase from Arabidopsis thaliana (Mouse-ear cress).